The following is a 659-amino-acid chain: tRNA 5-methylaminomethyl-2-thiouridine biosynthesis bifunctional protein MnmC (659 aa).

The interval 1-236 is tRNA (mnm(5)s(2)U34)-methyltransferase; the sequence is MKPVMPHAQL…KWEILRGEFL (236 aa). The tract at residues 267–659 is FAD-dependent cmnm(5)s(2)U34 oxidoreductase; sequence IGAGLAGCAT…FALRRLIRGK (393 aa).

It in the N-terminal section; belongs to the methyltransferase superfamily. tRNA (mnm(5)s(2)U34)-methyltransferase family. This sequence in the C-terminal section; belongs to the DAO family. FAD serves as cofactor.

It localises to the cytoplasm. It carries out the reaction 5-aminomethyl-2-thiouridine(34) in tRNA + S-adenosyl-L-methionine = 5-methylaminomethyl-2-thiouridine(34) in tRNA + S-adenosyl-L-homocysteine + H(+). Catalyzes the last two steps in the biosynthesis of 5-methylaminomethyl-2-thiouridine (mnm(5)s(2)U) at the wobble position (U34) in tRNA. Catalyzes the FAD-dependent demodification of cmnm(5)s(2)U34 to nm(5)s(2)U34, followed by the transfer of a methyl group from S-adenosyl-L-methionine to nm(5)s(2)U34, to form mnm(5)s(2)U34. The sequence is that of tRNA 5-methylaminomethyl-2-thiouridine biosynthesis bifunctional protein MnmC from Pseudomonas fluorescens (strain Pf0-1).